We begin with the raw amino-acid sequence, 334 residues long: NAC domain-containing protein 66 (334 aa).

The NAC domain maps to 11–175 (VPPGFRFHPT…GWVVCRVFKK (165 aa)). The DNA-binding element occupies 111–181 (IGMRKTLVFY…VFKKNNLCKN (71 aa)).

Mostly expressed in anthers. Also present in pollen, base of siliques and inflorescence stems.

It localises to the nucleus. Transcription activator of genes involved in biosynthesis of secondary walls. Together with NST1, required for the secondary cell wall thickening of the anther endocethium, which is necessary for anther dehiscence. May also regulate the secondary cell wall lignification of other tissues such as tracheary elements. This Arabidopsis thaliana (Mouse-ear cress) protein is NAC domain-containing protein 66 (NAC066).